The primary structure comprises 70 residues: Protein SlyX homolog (70 aa).

The protein belongs to the SlyX family.

The sequence is that of Protein SlyX homolog from Shewanella piezotolerans (strain WP3 / JCM 13877).